Here is a 271-residue protein sequence, read N- to C-terminus: MGLAAARNKQRFGLDPRNTTWSNNTSRFGHKHLEKLGWKPGSGLGLVPDSTTSHIKVSIKDDNLGLGAKLKKKEKQDEFDSGECTGLDVFQRLLGRLNGNEQTISDELDKQRTDNIINGKWGIHFVKGEVLASTWDAENKQLISYSMGKKRPVEGSSDSEVSDRKKTKKVKKEKKVKKVKKEKKEKKEKKDKKEKKVKKEKKEKKEKKLKDKHSKDTNEITRDQMLKPRDSAAVVPDAVSTRLSVRAKWIRQKRAAVMDAKALNEIFMVTD.

2 disordered regions span residues 1 to 26 (MGLA…NNTS) and 149 to 233 (KKRP…DSAA). Residues 17–26 (RNTTWSNNTS) are compositionally biased toward polar residues. Residues 25–71 (TSRFGHKHLEKLGWKPGSGLGLVPDSTTSHIKVSIKDDNLGLGAKLK) form the G-patch domain. Residues 165–205 (KKTKKVKKEKKVKKVKKEKKEKKEKKDKKEKKVKKEKKEKK) are compositionally biased toward basic residues. A compositionally biased stretch (basic and acidic residues) spans 206-230 (EKKLKDKHSKDTNEITRDQMLKPRD).

The protein belongs to the PINX1 family.

The protein localises to the nucleus. The protein resides in the nucleolus. In terms of biological role, involved in rRNA-processing at A0, A1 and A2 sites and negatively regulates telomerase. The chain is Protein PXR1 (PXR1) from Kluyveromyces lactis (strain ATCC 8585 / CBS 2359 / DSM 70799 / NBRC 1267 / NRRL Y-1140 / WM37) (Yeast).